Here is a 329-residue protein sequence, read N- to C-terminus: Signal recognition particle receptor FtsY (329 aa).

GTP contacts are provided by residues 127 to 134 (GVNGVGKT), 209 to 213 (DTAGR), and 273 to 276 (TKLD).

It belongs to the GTP-binding SRP family. FtsY subfamily. As to quaternary structure, part of the signal recognition particle protein translocation system, which is composed of SRP and FtsY.

The protein resides in the cell membrane. The protein localises to the cytoplasm. The enzyme catalyses GTP + H2O = GDP + phosphate + H(+). Involved in targeting and insertion of nascent membrane proteins into the cytoplasmic membrane. Acts as a receptor for the complex formed by the signal recognition particle (SRP) and the ribosome-nascent chain (RNC). The sequence is that of Signal recognition particle receptor FtsY from Bacillus subtilis (strain 168).